A 473-amino-acid polypeptide reads, in one-letter code: MAPPRKLHIKSYGCQMNVYDAQRMVDVLAPEGFVETATVDDADLVILNTCHIREKASEKVYSELGRLRLARDEAASSGRRMQIAVAGCVAQAEGEEIVRRAPVVDVVVGPQSYHHLPQLLARADQAGRALETEFPVEDKFGFLPQPRPETIRARGISAFVTVQEGCDKFCTFCVVPYTRGAEVSRPVSAIIDDVKRLADNGVREITLIGQNVNAYHGEGPDSRAWTLGRLLRRLAAVPGIVRLRYSTSHPNDVDDELIEAHRDLDALMPFVHLPVQSGSDPILAAMNRKHTAADYRRVIDRFRAVRPQIAFSSDFIVGFPGETEADFAATLALVTQIGYAGAYSFKYSPRPGTPAADMQEMVPAAVMDERLERLQQLIDSQQSAFNKAAIGQTVDVLFERAGRKPGQIVGRTAYLQPAHVFPGPMFLGPGMAPDSLVGQILPVRVDSLERYSLLGELAAKPPQHARPLAATGA.

The MTTase N-terminal domain maps to 5 to 125 (RKLHIKSYGC…LPQLLARADQ (121 aa)). 6 residues coordinate [4Fe-4S] cluster: cysteine 14, cysteine 50, cysteine 88, cysteine 166, cysteine 170, and cysteine 173. The region spanning 152–384 (RARGISAFVT…QQLIDSQQSA (233 aa)) is the Radical SAM core domain. The 73-residue stretch at 387–459 (KAAIGQTVDV…RYSLLGELAA (73 aa)) folds into the TRAM domain.

This sequence belongs to the methylthiotransferase family. MiaB subfamily. As to quaternary structure, monomer. [4Fe-4S] cluster serves as cofactor.

Its subcellular location is the cytoplasm. It catalyses the reaction N(6)-dimethylallyladenosine(37) in tRNA + (sulfur carrier)-SH + AH2 + 2 S-adenosyl-L-methionine = 2-methylsulfanyl-N(6)-dimethylallyladenosine(37) in tRNA + (sulfur carrier)-H + 5'-deoxyadenosine + L-methionine + A + S-adenosyl-L-homocysteine + 2 H(+). Catalyzes the methylthiolation of N6-(dimethylallyl)adenosine (i(6)A), leading to the formation of 2-methylthio-N6-(dimethylallyl)adenosine (ms(2)i(6)A) at position 37 in tRNAs that read codons beginning with uridine. This chain is tRNA-2-methylthio-N(6)-dimethylallyladenosine synthase, found in Rhodopseudomonas palustris (strain BisB5).